A 131-amino-acid chain; its full sequence is Small ribosomal subunit protein uS8 (131 aa).

Belongs to the universal ribosomal protein uS8 family. Part of the 30S ribosomal subunit. Contacts proteins S5 and S12.

Its function is as follows. One of the primary rRNA binding proteins, it binds directly to 16S rRNA central domain where it helps coordinate assembly of the platform of the 30S subunit. In Wolbachia pipientis subsp. Culex pipiens (strain wPip), this protein is Small ribosomal subunit protein uS8.